We begin with the raw amino-acid sequence, 476 residues long: Probable cytosolic Fe-S cluster assembly factor GH10760 (476 aa).

Residues Cys-23, Cys-68, Cys-71, Cys-74, Cys-187, Cys-243, Cys-395, and Cys-399 each contribute to the [4Fe-4S] cluster site.

It belongs to the NARF family.

Functionally, component of the cytosolic iron-sulfur (Fe/S) protein assembly machinery. Required for maturation of extramitochondrial Fe/S proteins. The protein is Probable cytosolic Fe-S cluster assembly factor GH10760 of Drosophila grimshawi (Hawaiian fruit fly).